Reading from the N-terminus, the 255-residue chain is Type III pantothenate kinase (255 aa).

6–13 (DIGNSNIV) provides a ligand contact to ATP. Substrate contacts are provided by residues Tyr-100 and 107–110 (GSDR). Asp-109 acts as the Proton acceptor in catalysis. Asp-129 is a K(+) binding site. An ATP-binding site is contributed by Thr-132. Thr-184 is a binding site for substrate.

It belongs to the type III pantothenate kinase family. As to quaternary structure, homodimer. The cofactor is NH4(+). It depends on K(+) as a cofactor.

The protein resides in the cytoplasm. It catalyses the reaction (R)-pantothenate + ATP = (R)-4'-phosphopantothenate + ADP + H(+). The protein operates within cofactor biosynthesis; coenzyme A biosynthesis; CoA from (R)-pantothenate: step 1/5. Catalyzes the phosphorylation of pantothenate (Pan), the first step in CoA biosynthesis. In Brevibacillus brevis (strain 47 / JCM 6285 / NBRC 100599), this protein is Type III pantothenate kinase.